Consider the following 226-residue polypeptide: Orotidine 5'-phosphate decarboxylase (226 aa).

Residues Asp-8, Lys-30, 58-67, Thr-117, Arg-177, Gln-186, Gly-206, and Arg-207 contribute to the substrate site; that span reads DLKIHDIPNT. Residue Lys-60 is the Proton donor of the active site.

It belongs to the OMP decarboxylase family. Type 1 subfamily. As to quaternary structure, homodimer.

The enzyme catalyses orotidine 5'-phosphate + H(+) = UMP + CO2. The protein operates within pyrimidine metabolism; UMP biosynthesis via de novo pathway; UMP from orotate: step 2/2. Its function is as follows. Catalyzes the decarboxylation of orotidine 5'-monophosphate (OMP) to uridine 5'-monophosphate (UMP). In Campylobacter jejuni subsp. doylei (strain ATCC BAA-1458 / RM4099 / 269.97), this protein is Orotidine 5'-phosphate decarboxylase.